A 750-amino-acid chain; its full sequence is Photosystem I P700 chlorophyll a apoprotein A1 (750 aa).

Transmembrane regions (helical) follow at residues 70–93 (VFSAHFGQLSIIFLWLSGMYFHGA), 156–179 (LYCTAIGALVFAALMLFAGWFHYH), 195–219 (LNHHLAGLLGLGSLSWAGHQVHVSL), 291–309 (IAHHHLAIAIIFLIAGHMY), 346–369 (WHAQLALNLAMLGSLTIVVAHHMY), 385–411 (LSLFTHHMWIGGFLIVGAAAHAAIFMV), 433–455 (AIISHLNWACIFLGFHSFGLYIH), and 531–549 (FLVHHIHAFTIHVTVLILL). 2 residues coordinate [4Fe-4S] cluster: Cys573 and Cys582. The next 2 membrane-spanning stretches (helical) occupy residues 589-610 (HVFLGLFWMYNAISVVIFHFSW) and 664-686 (LSAYGLFFLGAHFVWAFSLMFLF). Chlorophyll a' is bound at residue His675. 2 residues coordinate chlorophyll a: Met683 and Tyr691. Trp692 provides a ligand contact to phylloquinone. A helical membrane pass occupies residues 724 to 744 (AVGVTHYLLGGIATTWAFFLA).

The protein belongs to the PsaA/PsaB family. As to quaternary structure, the PsaA/B heterodimer binds the P700 chlorophyll special pair and subsequent electron acceptors. PSI consists of a core antenna complex that captures photons, and an electron transfer chain that converts photonic excitation into a charge separation. The eukaryotic PSI reaction center is composed of at least 11 subunits. It depends on P700 is a chlorophyll a/chlorophyll a' dimer, A0 is one or more chlorophyll a, A1 is one or both phylloquinones and FX is a shared 4Fe-4S iron-sulfur center. as a cofactor.

The protein localises to the plastid. It is found in the chloroplast thylakoid membrane. It catalyses the reaction reduced [plastocyanin] + hnu + oxidized [2Fe-2S]-[ferredoxin] = oxidized [plastocyanin] + reduced [2Fe-2S]-[ferredoxin]. In terms of biological role, psaA and PsaB bind P700, the primary electron donor of photosystem I (PSI), as well as the electron acceptors A0, A1 and FX. PSI is a plastocyanin-ferredoxin oxidoreductase, converting photonic excitation into a charge separation, which transfers an electron from the donor P700 chlorophyll pair to the spectroscopically characterized acceptors A0, A1, FX, FA and FB in turn. Oxidized P700 is reduced on the lumenal side of the thylakoid membrane by plastocyanin. This chain is Photosystem I P700 chlorophyll a apoprotein A1, found in Amborella trichopoda.